Consider the following 129-residue polypeptide: MKSVQFCFLFCCWRAICCRSCELTNITITVEKEECGFCISINTTWCAGYCYTRDLVYRDPARPNIQKTCTYKELVYETVKVPGCAHHADSLYTYPVATECQCGKCDGDSTDCTVRGLGPSYCSFSESRE.

Residues 1-20 form the signal peptide; sequence MKSVQFCFLFCCWRAICCRS. 6 disulfide bridges follow: C21–C69, C35–C84, C38–C122, C46–C100, C50–C102, and C105–C112. N25 and N42 each carry an N-linked (GlcNAc...) asparagine glycan.

The protein belongs to the glycoprotein hormones subunit beta family. As to quaternary structure, heterodimer. The active follitropin is a heterodimer composed of an alpha chain/CGA shared with other hormones and a unique beta chain/FSHB shown here.

It localises to the secreted. Its function is as follows. Together with the alpha chain CGA constitutes follitropin, the follicle-stimulating hormone, and provides its biological specificity to the hormone heterodimer. Binds FSHR, a G protein-coupled receptor, on target cells to activate downstream signaling pathways. Follitropin is involved in follicle development and spermatogenesis in reproductive organs. In Bubalus bubalis (Domestic water buffalo), this protein is Follitropin subunit beta (FSHB).